A 320-amino-acid polypeptide reads, in one-letter code: tRNA U34 carboxymethyltransferase (320 aa).

Residues lysine 89, tryptophan 103, lysine 108, glycine 128, aspartate 150–threonine 152, isoleucine 179–glutamate 180, methionine 194, tyrosine 198, and arginine 313 each bind carboxy-S-adenosyl-L-methionine.

Belongs to the class I-like SAM-binding methyltransferase superfamily. CmoB family. As to quaternary structure, homotetramer.

It catalyses the reaction carboxy-S-adenosyl-L-methionine + 5-hydroxyuridine(34) in tRNA = 5-carboxymethoxyuridine(34) in tRNA + S-adenosyl-L-homocysteine + H(+). In terms of biological role, catalyzes carboxymethyl transfer from carboxy-S-adenosyl-L-methionine (Cx-SAM) to 5-hydroxyuridine (ho5U) to form 5-carboxymethoxyuridine (cmo5U) at position 34 in tRNAs. The chain is tRNA U34 carboxymethyltransferase from Glaesserella parasuis serovar 5 (strain SH0165) (Haemophilus parasuis).